The following is a 689-amino-acid chain: Glycine--tRNA ligase beta subunit (689 aa).

Belongs to the class-II aminoacyl-tRNA synthetase family. Tetramer of two alpha and two beta subunits.

It localises to the cytoplasm. It catalyses the reaction tRNA(Gly) + glycine + ATP = glycyl-tRNA(Gly) + AMP + diphosphate. The chain is Glycine--tRNA ligase beta subunit from Lacticaseibacillus paracasei (strain ATCC 334 / BCRC 17002 / CCUG 31169 / CIP 107868 / KCTC 3260 / NRRL B-441) (Lactobacillus paracasei).